Here is a 268-residue protein sequence, read N- to C-terminus: Mitochondrial distribution and morphology protein 12 (268 aa).

The SMP-LTD domain occupies 1–266; it reads MSIDLEWCKL…FPNFHTIVMA (266 aa). Residues 66 to 136 form a disordered region; it reads EDDEEGSDRG…PPPAENPHPN (71 aa). Over residues 102–111 the composition is skewed to polar residues; the sequence is PATNVTSSLD. The span at 112-121 shows a compositional bias: basic and acidic residues; sequence TRSDQPDDQK.

This sequence belongs to the MDM12 family. Component of the ER-mitochondria encounter structure (ERMES) or MDM complex, composed of MMM1, MDM10, MDM12 and MDM34. An MMM1 homodimer associates with one molecule of MDM12 on each side in a pairwise head-to-tail manner, and the SMP-LTD domains of MMM1 and MDM12 generate a continuous hydrophobic tunnel for phospholipid trafficking.

The protein localises to the mitochondrion outer membrane. It localises to the endoplasmic reticulum membrane. Functionally, component of the ERMES/MDM complex, which serves as a molecular tether to connect the endoplasmic reticulum (ER) and mitochondria. Components of this complex are involved in the control of mitochondrial shape and protein biogenesis, and function in nonvesicular lipid trafficking between the ER and mitochondria. MDM12 is required for the interaction of the ER-resident membrane protein MMM1 and the outer mitochondrial membrane-resident beta-barrel protein MDM10. The MDM12-MMM1 subcomplex functions in the major beta-barrel assembly pathway that is responsible for biogenesis of all mitochondrial outer membrane beta-barrel proteins, and acts in a late step after the SAM complex. The MDM10-MDM12-MMM1 subcomplex further acts in the TOM40-specific pathway after the action of the MDM12-MMM1 complex. Essential for establishing and maintaining the structure of mitochondria and maintenance of mtDNA nucleoids. The polypeptide is Mitochondrial distribution and morphology protein 12 (Laccaria bicolor (strain S238N-H82 / ATCC MYA-4686) (Bicoloured deceiver)).